The sequence spans 352 residues: Gamma-aminobutyric acid-binding protein (352 aa).

Residues 1 to 28 (MFKSLHQYAHVFSRLSLFGLAFAAAAQA) form the signal peptide.

The protein belongs to the bacterial solute-binding protein 1 family.

Its subcellular location is the periplasm. Its function is as follows. Binds specifically gamma-aminobutyric acid (GABA) with nanomolar affinity. Does not bind structurally related compounds such as 4-aminovaleric acid, spermidine, histamine and butyric acid. This Pseudomonas aeruginosa (strain ATCC 15692 / DSM 22644 / CIP 104116 / JCM 14847 / LMG 12228 / 1C / PRS 101 / PAO1) protein is Gamma-aminobutyric acid-binding protein.